The chain runs to 421 residues: Ribulose bisphosphate carboxylase large chain (421 aa).

2 residues coordinate substrate: N68 and T118. K120 (proton acceptor) is an active-site residue. Residue K122 coordinates substrate. Mg(2+) contacts are provided by K146, D148, and E149. Position 146 is an N6-carboxylysine (K146). The active-site Proton acceptor is H239. The substrate site is built by R240, H272, and S324.

The protein belongs to the RuBisCO large chain family. Type I subfamily. In terms of assembly, heterohexadecamer of 8 large chains and 8 small chains; disulfide-linked. The disulfide link is formed within the large subunit homodimers. It depends on Mg(2+) as a cofactor. In terms of processing, the disulfide bond which can form in the large chain dimeric partners within the hexadecamer appears to be associated with oxidative stress and protein turnover.

Its subcellular location is the plastid. The protein localises to the chloroplast. It carries out the reaction 2 (2R)-3-phosphoglycerate + 2 H(+) = D-ribulose 1,5-bisphosphate + CO2 + H2O. The catalysed reaction is D-ribulose 1,5-bisphosphate + O2 = 2-phosphoglycolate + (2R)-3-phosphoglycerate + 2 H(+). Functionally, ruBisCO catalyzes two reactions: the carboxylation of D-ribulose 1,5-bisphosphate, the primary event in carbon dioxide fixation, as well as the oxidative fragmentation of the pentose substrate in the photorespiration process. Both reactions occur simultaneously and in competition at the same active site. This is Ribulose bisphosphate carboxylase large chain (rbcL) from Aegilops crassa (Persian goatgrass).